The sequence spans 122 residues: Biogenesis of lysosome-related organelles complex 1 subunit CNL1 (122 aa).

The span at 1–10 (MQDNSSHSRE) shows a compositional bias: basic and acidic residues. Positions 1-21 (MQDNSSHSRESASAGDDPLGI) are disordered. The stretch at 63-95 (ENTIDKNIAKFKELLEKCDTLENHYEMLNQLAI) forms a coiled coil.

The protein belongs to the BLOC1S4 family. As to quaternary structure, component of the biogenesis of lysosome-related organelles complex-1 (BLOC-1) composed of at least BLI1, BLS1, CNL1, KXD1, SNN1 and VAB2.

It is found in the cytoplasm. Component of the biogenesis of lysosome-related organelles complex-1 (BLOC-1), a complex that is involved in endosomal cargo sorting. The polypeptide is Biogenesis of lysosome-related organelles complex 1 subunit CNL1 (CLN1) (Saccharomyces cerevisiae (strain Lalvin QA23) (Baker's yeast)).